The primary structure comprises 695 residues: Elongation factor G (695 aa).

The tr-type G domain occupies 12-286 (DKLRNIGIMA…AVIDYLPSPL (275 aa)). GTP contacts are provided by residues 21–28 (AHIDAGKT), 85–89 (DTPGH), and 139–142 (NKMD).

Belongs to the TRAFAC class translation factor GTPase superfamily. Classic translation factor GTPase family. EF-G/EF-2 subfamily.

It is found in the cytoplasm. Its function is as follows. Catalyzes the GTP-dependent ribosomal translocation step during translation elongation. During this step, the ribosome changes from the pre-translocational (PRE) to the post-translocational (POST) state as the newly formed A-site-bound peptidyl-tRNA and P-site-bound deacylated tRNA move to the P and E sites, respectively. Catalyzes the coordinated movement of the two tRNA molecules, the mRNA and conformational changes in the ribosome. In Thermotoga sp. (strain RQ2), this protein is Elongation factor G.